The chain runs to 526 residues: Fluoride export protein 1 (526 aa).

Disordered stretches follow at residues Met-1–Ser-73 and Ala-90–Gly-149. At Met-1–Arg-159 the chain is on the cytoplasmic side. Basic and acidic residues-rich tracts occupy residues Ser-21–His-36 and Pro-103–Glu-123. The chain crosses the membrane as a helical span at residues Leu-160 to Ala-180. The Extracellular portion of the chain corresponds to Arg-181–Ser-194. Residues Pro-195–Ala-215 traverse the membrane as a helical segment. Topologically, residues Glu-216–Thr-260 are cytoplasmic. The disordered stretch occupies residues Pro-223 to Ala-242. A helical transmembrane segment spans residues Ile-261–Phe-281. Residues Ile-282–Ser-310 lie on the Extracellular side of the membrane. Residues Phe-311–Ala-331 traverse the membrane as a helical segment. Topologically, residues Gly-332 to Arg-361 are cytoplasmic. Residues Leu-362–Pro-382 traverse the membrane as a helical segment. Residues Asp-383–Ala-398 are Extracellular-facing. A helical membrane pass occupies residues Thr-399–Leu-419. The Cytoplasmic portion of the chain corresponds to Asn-420–Pro-424. A helical transmembrane segment spans residues Ser-425–Trp-445. Residues Asp-446–Ser-452 are Extracellular-facing. The chain crosses the membrane as a helical span at residues Leu-453–Leu-473. Topologically, residues Thr-474–Tyr-492 are cytoplasmic. Residues Val-493–Leu-513 traverse the membrane as a helical segment. Over Arg-514 to Ser-526 the chain is Extracellular.

It belongs to the fluoride channel Fluc/FEX (TC 1.A.43) family.

Its subcellular location is the cell membrane. The catalysed reaction is fluoride(in) = fluoride(out). Its function is as follows. Fluoride channel required for the rapid expulsion of cytoplasmic fluoride. In Neurospora crassa (strain ATCC 24698 / 74-OR23-1A / CBS 708.71 / DSM 1257 / FGSC 987), this protein is Fluoride export protein 1.